The following is a 431-amino-acid chain: Histidinol dehydrogenase (431 aa).

NAD(+) is bound by residues Y127, Q185, and N208. 3 residues coordinate substrate: S234, Q256, and H259. Zn(2+)-binding residues include Q256 and H259. Catalysis depends on proton acceptor residues E323 and H324. Substrate-binding residues include H324, D357, E411, and H416. D357 provides a ligand contact to Zn(2+). H416 provides a ligand contact to Zn(2+).

Belongs to the histidinol dehydrogenase family. Requires Zn(2+) as cofactor.

The enzyme catalyses L-histidinol + 2 NAD(+) + H2O = L-histidine + 2 NADH + 3 H(+). It participates in amino-acid biosynthesis; L-histidine biosynthesis; L-histidine from 5-phospho-alpha-D-ribose 1-diphosphate: step 9/9. Its function is as follows. Catalyzes the sequential NAD-dependent oxidations of L-histidinol to L-histidinaldehyde and then to L-histidine. The polypeptide is Histidinol dehydrogenase (Vibrio vulnificus (strain CMCP6)).